We begin with the raw amino-acid sequence, 347 residues long: Probable ribonucleotide transport ATP-binding protein mkl (347 aa).

An ABC transporter domain is found at 16 to 252 (IEVKGLTKSF…DEPVVRQFLN (237 aa)). ATP is bound at residue 48 to 55 (GPSGTGKS).

It belongs to the ABC transporter superfamily.

In terms of biological role, not known, could be involved in the transport of ribonucleotides. In Mycobacterium leprae (strain TN), this protein is Probable ribonucleotide transport ATP-binding protein mkl (mkl).